The primary structure comprises 334 residues: ADP-L-glycero-D-manno-heptose-6-epimerase (334 aa).

NADP(+)-binding positions include 11–12, 32–33, Lys-39, Lys-54, 77–81, and Asn-94; these read FI, DN, and QGACS. Tyr-141 functions as the Proton acceptor in the catalytic mechanism. Residue Lys-145 participates in NADP(+) binding. A substrate-binding site is contributed by Asn-171. NADP(+) contacts are provided by Val-172 and Lys-180. The active-site Proton acceptor is Lys-180. Substrate is bound by residues Arg-182, His-189, 203 to 206, Arg-216, and Tyr-295; that span reads FGSN.

The protein belongs to the NAD(P)-dependent epimerase/dehydratase family. HldD subfamily. In terms of assembly, homopentamer. The cofactor is NADP(+).

The catalysed reaction is ADP-D-glycero-beta-D-manno-heptose = ADP-L-glycero-beta-D-manno-heptose. It participates in nucleotide-sugar biosynthesis; ADP-L-glycero-beta-D-manno-heptose biosynthesis; ADP-L-glycero-beta-D-manno-heptose from D-glycero-beta-D-manno-heptose 7-phosphate: step 4/4. It functions in the pathway bacterial outer membrane biogenesis; LOS core biosynthesis. Functionally, catalyzes the interconversion between ADP-D-glycero-beta-D-manno-heptose and ADP-L-glycero-beta-D-manno-heptose via an epimerization at carbon 6 of the heptose. This is ADP-L-glycero-D-manno-heptose-6-epimerase from Neisseria meningitidis serogroup B (strain ATCC BAA-335 / MC58).